Here is a 111-residue protein sequence, read N- to C-terminus: Ig kappa chain V-III region CBPC 101 (111 aa).

A framework-1 region spans residues 1-23 (DIVLTQSPASLAVSLGQRATISC). A disulfide bridge links C23 with C92. Positions 24–38 (KASQSVDYTGESYMN) are complementarity-determining-1. The interval 39–53 (WYQQNPGQSPKLLIY) is framework-2. The interval 54 to 60 (AASNLES) is complementarity-determining-2. The interval 61–92 (GIPARFSGSGSGTDFTLNIHPVEEEDAATYYC) is framework-3. Residues 93 to 101 (QQSNEDPYT) are complementarity-determining-3. The segment at 102 to 111 (FGGGTKLEIK) is framework-4.

This is Ig kappa chain V-III region CBPC 101 from Mus musculus (Mouse).